The following is a 309-amino-acid chain: Oxidoreductase NAD-binding domain-containing protein 1 (309 aa).

An N-terminal signal peptide occupies residues Met1–Gly14. The FAD-binding FR-type domain maps to His47–Lys161. Residue Gly175 to Pro180 coordinates NAD(+).

This chain is Oxidoreductase NAD-binding domain-containing protein 1 (OXNAD1), found in Bos taurus (Bovine).